A 311-amino-acid chain; its full sequence is uncharacterized protein (311 aa).

A run of 10 helical transmembrane segments spans residues 13–33, 41–61, 76–96, 103–123, 128–148, 157–177, 192–212, 218–238, 248–268, and 272–292; these read STAVIKMVISMVIFGSIGFFS, FELVFVRCLCATLFLGFCWLA, LQTLACGFFLVFNWVFLFKSF, IAISVYHLAPVLVLLLGSFFY, NVISVSSIIICFLGTALISGI, LMGSGIIWAVLAALFYAFTTL, FLQTGLGVIILIPFIHFGAFA, NWIMVVSTGIIHTGIVYLLFF, FISIIVFLDPAVAIVLDTVFT, and PDLYQTLGIVMIFAGMALTLV. EamA domains lie at 24 to 147 and 166 to 292; these read VIFG…LISG and VLAA…LTLV.

It belongs to the EamA transporter family.

It localises to the cell membrane. This is an uncharacterized protein from Bacillus subtilis (strain 168).